The chain runs to 171 residues: Histone H1, gonadal (171 aa).

2 disordered regions span residues 1–40 and 133–171; these read AASP…AHPP and AKAK…KAKP. Residues 9–35 are compositionally biased toward basic residues; that stretch reads ASPRKSPKKSPRKSPKKKSPRKRKARS. Positions 37–111 constitute an H15 domain; sequence AHPPVIDMIT…GATGRFRVGA (75 aa).

The protein belongs to the histone H1/H5 family. As to expression, sperm.

It localises to the nucleus. Its subcellular location is the chromosome. Its function is as follows. Histones H1 are necessary for the condensation of nucleosome chains into higher-order structures. This chain is Histone H1, gonadal, found in Echinolampas crassa (Sea urchin).